A 306-amino-acid chain; its full sequence is Homeobox protein HMX3 (306 aa).

Residues 95–181 form a disordered region; it reads HTPRTEVPDK…DKKPCRKKKT (87 aa). Basic and acidic residues-rich tracts occupy residues 117 to 143 and 153 to 174; these read GERD…KSPE and EEGK…PDKK. A DNA-binding region (homeobox) is located at residues 178–237; it reads KKKTRTVFSRSQVFQLESTFDMKRYLSSSERAGLAASLHLTETQVKIWFQNRRNKWKRQL.

This sequence belongs to the HMX homeobox family.

The protein resides in the nucleus. Functionally, transcription factor involved in specification of neuronal cell types and which is required for inner ear and hypothalamus development. Binds to the 5'-CAAGTG-3' core sequence. May act as a stage-specific inhibitor of anf1 in the anterior neural plate during the development. This is Homeobox protein HMX3 (hmx3) from Xenopus tropicalis (Western clawed frog).